Reading from the N-terminus, the 607-residue chain is Elongation factor 4 (607 aa).

Residues 6 to 188 enclose the tr-type G domain; sequence DRIRNFSIIA…AIVARIPAPK (183 aa). GTP contacts are provided by residues 18-23 and 135-138; these read DHGKST and NKID.

This sequence belongs to the TRAFAC class translation factor GTPase superfamily. Classic translation factor GTPase family. LepA subfamily.

The protein resides in the cell inner membrane. It catalyses the reaction GTP + H2O = GDP + phosphate + H(+). Functionally, required for accurate and efficient protein synthesis under certain stress conditions. May act as a fidelity factor of the translation reaction, by catalyzing a one-codon backward translocation of tRNAs on improperly translocated ribosomes. Back-translocation proceeds from a post-translocation (POST) complex to a pre-translocation (PRE) complex, thus giving elongation factor G a second chance to translocate the tRNAs correctly. Binds to ribosomes in a GTP-dependent manner. This is Elongation factor 4 from Rhizorhabdus wittichii (strain DSM 6014 / CCUG 31198 / JCM 15750 / NBRC 105917 / EY 4224 / RW1) (Sphingomonas wittichii).